Here is a 367-residue protein sequence, read N- to C-terminus: UDP-N-acetylenolpyruvoylglucosamine reductase 2 (367 aa).

An FAD-binding PCMH-type domain is found at Ile-31–Asp-198. Arg-176 is an active-site residue. The active-site Proton donor is the Ser-256. Residue Glu-357 is part of the active site.

It belongs to the MurB family. It depends on FAD as a cofactor.

The protein localises to the cytoplasm. The enzyme catalyses UDP-N-acetyl-alpha-D-muramate + NADP(+) = UDP-N-acetyl-3-O-(1-carboxyvinyl)-alpha-D-glucosamine + NADPH + H(+). It functions in the pathway cell wall biogenesis; peptidoglycan biosynthesis. In terms of biological role, cell wall formation. The sequence is that of UDP-N-acetylenolpyruvoylglucosamine reductase 2 (murB2) from Corynebacterium glutamicum (strain ATCC 13032 / DSM 20300 / JCM 1318 / BCRC 11384 / CCUG 27702 / LMG 3730 / NBRC 12168 / NCIMB 10025 / NRRL B-2784 / 534).